A 508-amino-acid chain; its full sequence is Photosystem II CP47 reaction center protein (508 aa).

A run of 6 helical transmembrane segments spans residues 21 to 36, 101 to 115, 140 to 156, 203 to 218, 237 to 252, and 457 to 472; these read AVHI…WAGS, IILS…IWHW, GIHL…FGAF, IAAG…FHLS, VLSS…AFIV, and CFAL…HGAR.

This sequence belongs to the PsbB/PsbC family. PsbB subfamily. In terms of assembly, PSII is composed of 1 copy each of membrane proteins PsbA, PsbB, PsbC, PsbD, PsbE, PsbF, PsbH, PsbI, PsbJ, PsbK, PsbL, PsbM, PsbT, PsbX, PsbY, PsbZ, Psb30/Ycf12, at least 3 peripheral proteins of the oxygen-evolving complex and a large number of cofactors. It forms dimeric complexes. Requires Binds multiple chlorophylls. PSII binds additional chlorophylls, carotenoids and specific lipids. as cofactor.

The protein localises to the plastid. The protein resides in the chloroplast thylakoid membrane. In terms of biological role, one of the components of the core complex of photosystem II (PSII). It binds chlorophyll and helps catalyze the primary light-induced photochemical processes of PSII. PSII is a light-driven water:plastoquinone oxidoreductase, using light energy to abstract electrons from H(2)O, generating O(2) and a proton gradient subsequently used for ATP formation. This is Photosystem II CP47 reaction center protein from Chara vulgaris (Common stonewort).